A 1198-amino-acid polypeptide reads, in one-letter code: Regulator of G-protein signaling 3 (1198 aa).

The 120-residue stretch at 137–256 folds into the C2 domain; it reads GAGQLRLSID…TPDKEISGWY (120 aa). The 78-residue stretch at 299 to 376 folds into the PDZ domain; the sequence is KITIPRGKDG…EIILLVWRMV (78 aa). Arg448 is modified (omega-N-methylarginine). The tract at residues 669 to 933 is disordered; the sequence is QQLAASPPDS…GAEGGLSLRV (265 aa). Residue Ser674 is modified to Phosphoserine. Over residues 679–697 the composition is skewed to basic and acidic residues; the sequence is KMFETEADEKREMALEEGK. The segment covering 739–751 has biased composition (polar residues); that stretch reads EPLSSKDSATSEG. The segment covering 753–773 has biased composition (pro residues); it reads PPGPDAPPSKDVPPCQEPPPA. Positions 877-906 are enriched in acidic residues; that stretch reads GDEEDAEEAEEVEEGEEGEEDEDEDTSDDN. The span at 907–917 shows a compositional bias: basic and acidic residues; that stretch reads YGERSEAKRSS. Ser943, Ser946, Ser978, and Ser1007 each carry phosphoserine. 2 disordered regions span residues 1007-1026 and 1032-1056; these read SGAD…KSKN and KNKL…ADKM. One can recognise an RGS domain in the interval 1073 to 1198; it reads SLEKLLVHKY…INQKKMSPPL (126 aa).

As to quaternary structure, binds EFNB1 and EFNB2. Binds the GNB1-GNG2 heterodimer. Phosphorylated by cyclic GMP-dependent protein kinase. In terms of processing, ISGylated.

It localises to the cytoplasm. It is found in the nucleus. The protein resides in the cell membrane. In terms of biological role, down-regulates signaling from heterotrimeric G-proteins by increasing the GTPase activity of the alpha subunits, thereby driving them into their inactive GDP-bound form. Down-regulates G-protein-mediated release of inositol phosphates and activation of MAP kinases. The chain is Regulator of G-protein signaling 3 (RGS3) from Homo sapiens (Human).